The chain runs to 428 residues: A-kinase anchor protein 5 (428 aa).

Residues 1–170 form an essential to the intracellular anchoring function region; that stretch reads MEITVSEIQV…VTKTQTQSDD (170 aa). Disordered regions lie at residues 1–207 and 237–313; these read MEIT…SPGE and LEEK…TELS. Basic and acidic residues predominate over residues 10-32; the sequence is VESKDETRSAEVRPQDERQEEKA. Cysteine 36 carries S-palmitoyl cysteine lipidation. Residues 37 to 48 are compositionally biased toward basic residues; the sequence is FKRRKKAAKAMK. The segment covering 57 to 68 has biased composition (basic and acidic residues); the sequence is DAAKKCPPEARA. Residues 76–96 carry the AKAP CaM-binding motif; the sequence is GGAWDSIKRLVTRRKRSESSK. Threonine 87 is subject to Phosphothreonine; by PKC. Serine 92 carries the phosphoserine; by PKA modification. A Phosphoserine; by PKC modification is found at serine 94. Residue cysteine 129 is the site of S-palmitoyl cysteine attachment. Basic and acidic residues predominate over residues 133-156; it reads SKGEKRSNHSKIIEDSDRSVKVQE. A compositionally biased stretch (polar residues) spans 161-170; it reads VTKTQTQSDD. Composition is skewed to basic and acidic residues over residues 171–191 and 290–311; these read QATKSKSPQDVREDVSQKGDD and PDWKEHESREIVVEESKPKDTE. Residues 389-410 form an RII-beta subunit binding domain region; it reads YETLLIETASSLVKNAIQLSIE. A tethers NFATC2 to CRAC channels region spans residues 411-428; that stretch reads QLVNEMASDDNTINNRLQ.

Binding protein for dimer of the RII-beta regulatory subunit of cAMP-dependent protein kinase (PKA) and also for the protein kinase C (PKC) and the phosphatase calcineurin (PP2B). Each enzyme is inhibited when bound to the anchoring protein. Also binds the beta2-adrenergic receptor. Part of a complex containing AKAP5, ADCY5, ADCY6 and PDE4C. Interacts with ADCY8, and enhances its phosphorylation at lipid rafts. Interacts with ORAI1 (isoform alpha) (via N-terminus) upon store depletion and in response to LTC4. Does not interact with ORAI2 and ORAI3 paralogs. Interacts (via leucine zipper domain) with NFATC2/NFAT1. Interacts with calmodulin; the interaction is calcium-independent. Interacts with KCNQ2; the interaction may help KCNQ2 channel complex to retain calcium-bound calmodulin. Post-translationally, palmitoylated. Palmitoylation at Cys-36 and Cys-129 play a key role in the targeting of AKAP5 to lipid rafts. Palmitoylation by ZDHHC2 is required for AKAP5 function in LTP-stimulated recycling endosome exocytosis. As to expression, predominantly in brain, and to a lesser extent in adrenal medulla, lung and anterior pituitary.

The protein resides in the postsynaptic recycling endosome membrane. Functionally, multivalent scaffold protein that anchors the cAMP-dependent protein kinase/PKA to cytoskeletal and/or organelle-associated proteins, targeting the signal carried by cAMP to specific intracellular effectors. Association with the beta2-adrenergic receptor (beta2-AR) not only regulates beta2-AR signaling pathway, but also the activation by PKA by switching off the beta2-AR signaling cascade. Plays a role in long term synaptic potentiation by regulating protein trafficking from the dendritic recycling endosomes to the plasma membrane and controlling both structural and functional plasticity at excitatory synapses. Associates with ORAI1 pore-forming subunit of CRAC channels in Ca(2+) signaling microdomains where it recruits NFATC2/NFAT1 and couples store-operated Ca(2+) influx to calmodulin and calcineurin signaling and activation of NFAT-dependent transcriptional responses. This Bos taurus (Bovine) protein is A-kinase anchor protein 5 (AKAP5).